A 233-amino-acid chain; its full sequence is MFQPAGKRCFTIESLVAKDNPLSSEEPLRPAALPYPGAPAEAFVSGFPSPAGRSLYNNPELVFPETVSHPPLTVHPHQLGASHLQHPHSFFAPQHRDPLNFYPWVLRNRFFGHRFQGGDVSQESLLLHGPFARKPKRIRTAFSPSQLLRLERAFEKNHYVVGAERKQLASSLSLSETQVKVWFQNRRTKYKRQKLEEEGPDSDQKKKGSHHINRWRLATKQPNGEDIDVTSND.

The segment at residues 135–194 (PKRIRTAFSPSQLLRLERAFEKNHYVVGAERKQLASSLSLSETQVKVWFQNRRTKYKRQK) is a DNA-binding region (homeobox). The segment at 192–233 (RQKLEEEGPDSDQKKKGSHHINRWRLATKQPNGEDIDVTSND) is disordered. The segment covering 193-206 (QKLEEEGPDSDQKK) has biased composition (basic and acidic residues).

This sequence belongs to the EMX homeobox family.

It is found in the nucleus. May function in combinations with OTX1/2 to specify cell fates in the developing central nervous system. The protein is Homeobox protein EMX1 (emx1) of Xenopus tropicalis (Western clawed frog).